The chain runs to 543 residues: MIPNSSSSSILSLLVLLLFSTSSSWATNSIHEDFLNCLSIYKSSFPIPIYTSKNSSFNTLFRSSARNLRFLSPNSTQKPEFIITPTLESHVQTTVVCSKKHGLDLKVRSGGHDVEGLSYVSDSPYVMIDLVDFRNITVNVKNATAWIQAGSSLGEVYYKVGNESKNTLGFPAGFCPTVGVGGHISGGGFGSLVRKYGLASDQVIDARIVTVNGEILNKETMGKDLYWAIRGGGANNFGVLLSWKVKLVPVTPIVTVATIDRTLEQGATNLVHKWQFVADRLHEDVYIGLTMVTANTSRAGEKTVVAQFSFLFLGNTDRLLQIMEESFPELGLKRNDTTEMSWVESHVYFYRRGQPIEFLWDRDHLTKSFLKVKSDYVREPISKLGLEGIWKRYVGGDSPAMLWTPFGGRMNQISEFESPYPHRAGNIYNIMYVGNWLNENESEKQLNWMRSFYSYMGRYVSKNPRSAYLNYKDLDLGVNDNNVSEYIRYLKARSWGRKYFKNNFEKLVKVKSMVDPDNFFKNKQSIPPIRSWGKELEAINIVI.

The signal sequence occupies residues 1–26; that stretch reads MIPNSSSSSILSLLVLLLFSTSSSWA. C37 and C97 form a disulfide bridge. 9 N-linked (GlcNAc...) asparagine glycosylation sites follow: N54, N74, N135, N142, N162, N295, N335, N440, and N482. The region spanning 75–250 is the FAD-binding PCMH-type domain; the sequence is STQKPEFIIT…LSWKVKLVPV (176 aa). Residues 112–175 constitute a cross-link (6-(S-cysteinyl)-8alpha-(pros-histidyl)-FAD (His-Cys)); it reads HDVEGLSYVS…NTLGFPAGFC (64 aa).

The protein belongs to the oxygen-dependent FAD-linked oxidoreductase family. FAD serves as cofactor. The FAD cofactor is bound via a bicovalent 6-S-cysteinyl, 8alpha-N1-histidyl FAD linkage.

It catalyses the reaction (S)-canadine + 2 O2 + H(+) = berberine + 2 H2O2. Its function is as follows. Catalyzes the oxidation of different tetrahydroprotoberberines, such as (S)-canadine, (S)-scoulerine and (S)-tetrahydropalmatine. In Argemone mexicana (Mexican prickly poppy), this protein is Tetrahydroberberine oxidase.